The sequence spans 428 residues: GTPase Obg (428 aa).

Residues 1 to 158 enclose the Obg domain; it reads MFVDQVKIYV…RYIVLELKVL (158 aa). The interval 118 to 143 is disordered; the sequence is KGGRGGRGNTRFATPANPAPQLSENG. Residues 159 to 329 form the OBG-type G domain; it reads ADVGLVGFPS…LLFEIADRLE (171 aa). GTP contacts are provided by residues 165 to 172, 190 to 194, 212 to 215, 282 to 285, and 310 to 312; these read GFPSVGKS, FTTLN, DLPG, NKMD, and SAV. Mg(2+)-binding residues include serine 172 and threonine 192. Residues 350–428 form the OCT domain; the sequence is KLEDEEAPFE…LLEFEFEFID (79 aa).

It belongs to the TRAFAC class OBG-HflX-like GTPase superfamily. OBG GTPase family. Monomer. Mg(2+) serves as cofactor.

The protein localises to the cytoplasm. Its function is as follows. An essential GTPase which binds GTP, GDP and possibly (p)ppGpp with moderate affinity, with high nucleotide exchange rates and a fairly low GTP hydrolysis rate. Plays a role in control of the cell cycle, stress response, ribosome biogenesis and in those bacteria that undergo differentiation, in morphogenesis control. This is GTPase Obg from Bacillus licheniformis (strain ATCC 14580 / DSM 13 / JCM 2505 / CCUG 7422 / NBRC 12200 / NCIMB 9375 / NCTC 10341 / NRRL NRS-1264 / Gibson 46).